The following is a 313-amino-acid chain: uncharacterized protein (313 aa).

A run of 9 helical transmembrane segments spans residues Ala31 to Phe53, Leu62 to Tyr84, Val104 to Ser126, Phe147 to Val161, Ser166 to Leu185, Arg198 to Phe220, Ser225 to Ile244, Phe264 to Phe282, and Pro286 to Ile308.

It is found in the cell membrane. This is an uncharacterized protein from Archaeoglobus fulgidus (strain ATCC 49558 / DSM 4304 / JCM 9628 / NBRC 100126 / VC-16).